Here is a 389-residue protein sequence, read N- to C-terminus: Gibberellin 20 oxidase 2 (389 aa).

The segment covering 1 to 17 (MVAEHPTPPQPHQPPPM) has biased composition (pro residues). The disordered stretch occupies residues 1 to 23 (MVAEHPTPPQPHQPPPMDSTAGS). The Fe2OG dioxygenase domain occupies 224-324 (DSSSIMRCNY…RRSLAFFLCP (101 aa)). Positions 249, 251, and 305 each coordinate Fe cation. Residue Arg315 is part of the active site.

It belongs to the iron/ascorbate-dependent oxidoreductase family. GA20OX subfamily. Fe cation is required as a cofactor. It depends on L-ascorbate as a cofactor.

It catalyses the reaction gibberellin A12 + 2 2-oxoglutarate + 3 O2 + H(+) = gibberellin A9 + 2 succinate + 3 CO2 + 2 H2O. It carries out the reaction gibberellin A53 + 2 2-oxoglutarate + 3 O2 + H(+) = gibberellin A20 + 2 succinate + 3 CO2 + 2 H2O. Its function is as follows. Key oxidase enzyme in the biosynthesis of gibberellin that catalyzes the conversion of GA53 to GA20 via a three-step oxidation at C-20 of the GA skeleton. The polypeptide is Gibberellin 20 oxidase 2 (20ox2) (Oryza sativa subsp. indica (Rice)).